The chain runs to 181 residues: Regulator of G-protein signaling 5 (181 aa).

The RGS domain maps to serine 64 to isoleucine 180.

It localises to the cytoplasm. Its subcellular location is the membrane. In terms of biological role, inhibits signal transduction by increasing the GTPase activity of G protein alpha subunits thereby driving them into their inactive GDP-bound form. Binds to G(i)-alpha and G(o)-alpha, but not to G(s)-alpha. This is Regulator of G-protein signaling 5 (RGS5) from Sus scrofa (Pig).